Reading from the N-terminus, the 156-residue chain is 6,7-dimethyl-8-ribityllumazine synthase (156 aa).

Residues Phe23, Ala57 to Glu59, and Ala81 to Ile83 contribute to the 5-amino-6-(D-ribitylamino)uracil site. A (2S)-2-hydroxy-3-oxobutyl phosphate-binding site is contributed by Ser86–Thr87. The active-site Proton donor is the His89. Phe114 provides a ligand contact to 5-amino-6-(D-ribitylamino)uracil. A (2S)-2-hydroxy-3-oxobutyl phosphate-binding site is contributed by Arg128.

It belongs to the DMRL synthase family.

It carries out the reaction (2S)-2-hydroxy-3-oxobutyl phosphate + 5-amino-6-(D-ribitylamino)uracil = 6,7-dimethyl-8-(1-D-ribityl)lumazine + phosphate + 2 H2O + H(+). The protein operates within cofactor biosynthesis; riboflavin biosynthesis; riboflavin from 2-hydroxy-3-oxobutyl phosphate and 5-amino-6-(D-ribitylamino)uracil: step 1/2. Functionally, catalyzes the formation of 6,7-dimethyl-8-ribityllumazine by condensation of 5-amino-6-(D-ribitylamino)uracil with 3,4-dihydroxy-2-butanone 4-phosphate. This is the penultimate step in the biosynthesis of riboflavin. The protein is 6,7-dimethyl-8-ribityllumazine synthase of Sulfurospirillum multivorans (Dehalospirillum multivorans).